The sequence spans 200 residues: Recombination protein RecR (200 aa).

Residues 59–74 (CGTCGSLDVTDPCAVC) form a C4-type zinc finger. The region spanning 82 to 177 (RLLCVVEEVG…PVTMLARGVP (96 aa)) is the Toprim domain.

It belongs to the RecR family.

May play a role in DNA repair. It seems to be involved in an RecBC-independent recombinational process of DNA repair. It may act with RecF and RecO. The protein is Recombination protein RecR of Caulobacter vibrioides (strain ATCC 19089 / CIP 103742 / CB 15) (Caulobacter crescentus).